A 345-amino-acid polypeptide reads, in one-letter code: Growth hormone-inducible transmembrane protein (345 aa).

The N-terminal 45 residues, 1–45 (MLAARLVCLRTLPSRVFHPAFTKASPVVKNSITKNQWLLTPSREY), are a transit peptide targeting the mitochondrion. Over 46–82 (ATKTRIGIRRGRTGQELKEAALEPSMEKIFKIDQMGR) the chain is Mitochondrial matrix. A helical transmembrane segment spans residues 83 to 103 (WFVAGGAAVGLGALCYYGLGL). Residues 104–125 (SNEIGAIEKAVIWPQYVKDRIH) are Mitochondrial intermembrane-facing. A helical membrane pass occupies residues 126 to 146 (STYMYLAGSIGLTALSAIAIS). Topologically, residues 147–159 (RTPVLMNFMMRGS) are mitochondrial matrix. Residues 160 to 180 (WVTIGVTFAAMVGAGMLVRSI) traverse the membrane as a helical segment. The Mitochondrial intermembrane portion of the chain corresponds to 181 to 190 (PYDQSPGPKH). Residues 191–211 (LAWLLHSGVMGAVVAPLTILG) traverse the membrane as a helical segment. Residues 212-213 (GP) lie on the Mitochondrial matrix side of the membrane. Residues 214–234 (LLIRAAWYTAGIVGGLSTVAM) form a helical membrane-spanning segment. At 235–244 (CAPSEKFLNM) the chain is on the mitochondrial intermembrane side. The chain crosses the membrane as a helical span at residues 245 to 265 (GAPLGVGLGLVFVSSLGSMFL). The Mitochondrial matrix portion of the chain corresponds to 266–271 (PPTTVA). A helical membrane pass occupies residues 272–292 (GATLYSVAMYGGLVLFSMFLL). Residues 293-345 (YDTQKVIKRAEVSPMYGVQKYDPINSMLSIYMDTLNIFMRVATMLATGGNRKK) lie on the Mitochondrial intermembrane side of the membrane.

It belongs to the BI1 family. In terms of assembly, interacts with LETM1. Interacts with AFG3L2. In terms of processing, undergoes AFG3L2-mediated proteolytic degradation, upon hyperpolarization of mitochondria.

The protein localises to the mitochondrion inner membrane. The catalysed reaction is Ca(2+)(in) + 2 H(+)(out) = Ca(2+)(out) + 2 H(+)(in). It catalyses the reaction K(+)(in) + H(+)(out) = K(+)(out) + H(+)(in). In terms of biological role, plays an important role in maintenance of mitochondrial morphology and in mediating either calcium or potassium/proton antiport. Mediates proton-dependent calcium efflux from mitochondrion. Also functions as an electroneutral mitochondrial proton/potassium exchanger. Required for the mitochondrial tubular network and cristae organization. Involved in apoptotic release of cytochrome c. Inhibits the proteolytic activity of AFG3L2, stimulating respiration and stabilizing respiratory enzymes in actively respiring mitochondria. However, when mitochondria become hyperpolarized, GHITM loses its inhibitory activity toward AFG3L2 and the now the active AFG3L2 turns first on GHITM and, if hyperpolarization persists, on other proteins of the mitochondria, leading to a broad remodeling of the mitochondrial proteome. In Homo sapiens (Human), this protein is Growth hormone-inducible transmembrane protein (GHITM).